Reading from the N-terminus, the 251-residue chain is Ubiquinone/menaquinone biosynthesis C-methyltransferase UbiE (251 aa).

S-adenosyl-L-methionine is bound by residues threonine 74, aspartate 95, and 123–124 (NA).

This sequence belongs to the class I-like SAM-binding methyltransferase superfamily. MenG/UbiE family.

It carries out the reaction a 2-demethylmenaquinol + S-adenosyl-L-methionine = a menaquinol + S-adenosyl-L-homocysteine + H(+). The catalysed reaction is a 2-methoxy-6-(all-trans-polyprenyl)benzene-1,4-diol + S-adenosyl-L-methionine = a 5-methoxy-2-methyl-3-(all-trans-polyprenyl)benzene-1,4-diol + S-adenosyl-L-homocysteine + H(+). It participates in quinol/quinone metabolism; menaquinone biosynthesis; menaquinol from 1,4-dihydroxy-2-naphthoate: step 2/2. It functions in the pathway cofactor biosynthesis; ubiquinone biosynthesis. Its function is as follows. Methyltransferase required for the conversion of demethylmenaquinol (DMKH2) to menaquinol (MKH2) and the conversion of 2-polyprenyl-6-methoxy-1,4-benzoquinol (DDMQH2) to 2-polyprenyl-3-methyl-6-methoxy-1,4-benzoquinol (DMQH2). The chain is Ubiquinone/menaquinone biosynthesis C-methyltransferase UbiE from Marinomonas sp. (strain MWYL1).